A 77-amino-acid chain; its full sequence is Small ribosomal subunit protein uS17 (77 aa).

Belongs to the universal ribosomal protein uS17 family. Part of the 30S ribosomal subunit.

In terms of biological role, one of the primary rRNA binding proteins, it binds specifically to the 5'-end of 16S ribosomal RNA. The sequence is that of Small ribosomal subunit protein uS17 from Rickettsia akari (strain Hartford).